We begin with the raw amino-acid sequence, 638 residues long: SUMO-activating enzyme subunit 2 (638 aa).

Residues 24 to 29 (GAGGIG), D48, 56 to 59 (NLNR), K72, 95 to 96 (SI), and 117 to 122 (DNRAAR) each bind ATP. The Zn(2+) site is built by C158 and C161. K164 is covalently cross-linked (Glycyl lysine isopeptide (Lys-Gly) (interchain with G-Cter in SUMO1)). C173 serves as the catalytic Glycyl thioester intermediate. K190 is covalently cross-linked (Glycyl lysine isopeptide (Lys-Gly) (interchain with G-Cter in SUMO)). Residues 202–233 (ADQEVSPDRADPEAAWEPTEAEARARASNEDG) form a disordered region. Phosphoserine is present on S207. Residues 222 to 233 (AEARARASNEDG) are compositionally biased toward basic and acidic residues. A Glycyl lysine isopeptide (Lys-Gly) (interchain with G-Cter in SUMO1); alternate cross-link involves residue K236. Residues K236 and K257 each participate in a glycyl lysine isopeptide (Lys-Gly) (interchain with G-Cter in SUMO2); alternate cross-link. Residues K257 and K271 each participate in a glycyl lysine isopeptide (Lys-Gly) (interchain with G-Cter in SUMO); alternate cross-link. An N6-acetyllysine; alternate modification is found at K271. Residue K275 forms a Glycyl lysine isopeptide (Lys-Gly) (interchain with G-Cter in SUMO) linkage. A Glycyl lysine isopeptide (Lys-Gly) (interchain with G-Cter in SUMO2) cross-link involves residue K369. A Glycyl lysine isopeptide (Lys-Gly) (interchain with G-Cter in SUMO1); alternate cross-link involves residue K418. K418 participates in a covalent cross-link: Glycyl lysine isopeptide (Lys-Gly) (interchain with G-Cter in SUMO2); alternate. Zn(2+) is bound by residues C439 and C442. S505 carries the post-translational modification Phosphoserine. K538 is covalently cross-linked (Glycyl lysine isopeptide (Lys-Gly) (interchain with G-Cter in SUMO2)). Phosphoserine occurs at positions 548 and 590. The segment covering 548–561 (SPEKVGPKQAEDAA) has biased composition (basic and acidic residues). The disordered stretch occupies residues 548–638 (SPEKVGPKQA…EDPDDVIALD (91 aa)). A compositionally biased stretch (acidic residues) spans 581–594 (EQDDVLIVDSDEEG). Residues 603–614 (GDDKARKRKLEE) show a composition bias toward basic and acidic residues. K609 participates in a covalent cross-link: Glycyl lysine isopeptide (Lys-Gly) (interchain with G-Cter in SUMO). K611 is covalently cross-linked (Glycyl lysine isopeptide (Lys-Gly) (interchain with G-Cter in SUMO); alternate). N6-acetyllysine; alternate is present on K611. K621 is covalently cross-linked (Glycyl lysine isopeptide (Lys-Gly) (interchain with G-Cter in SUMO)). A compositionally biased stretch (acidic residues) spans 628–638 (MEDPDDVIALD).

Belongs to the ubiquitin-activating E1 family. Heterodimer of SAE1 and UBA2/SAE2. The heterodimer corresponds to the two domains that are encoded on a single polypeptide chain in ubiquitin-activating enzyme E1. Interacts with UBE2I. Sumoylated with SUMO1 and SUMO2/3 and by UBC9. Sumoylation at Lys-236 inhibits enzymatic activity. Sumoylation at the C-terminal lysine cluster plays an essential role in nuclear trafficking. In terms of tissue distribution, broadly expressed, with highest levels in testis.

It localises to the cytoplasm. The protein localises to the nucleus. Its pathway is protein modification; protein sumoylation. Functionally, the heterodimer acts as an E1 ligase for SUMO1, SUMO2, SUMO3, and probably SUMO4. It mediates ATP-dependent activation of SUMO proteins followed by formation of a thioester bond between a SUMO protein and a conserved active site cysteine residue on UBA2/SAE2. In Mus musculus (Mouse), this protein is SUMO-activating enzyme subunit 2 (Uba2).